We begin with the raw amino-acid sequence, 418 residues long: Actin-related protein 3-B (418 aa).

It belongs to the actin family. ARP3 subfamily. In terms of assembly, component of the Arp2/3 complex composed of actr2/arp2, actr3/arp3, arpc1 (arpc1a or arpc1b), arpc2, arpc3, arpc4 and arpc5.

It is found in the cytoplasm. The protein localises to the cytoskeleton. Its subcellular location is the cell projection. It localises to the nucleus. Functionally, ATP-binding component of the Arp2/3 complex, a multiprotein complex that mediates actin polymerization upon stimulation by nucleation-promoting factor (NPF). The Arp2/3 complex mediates the formation of branched actin networks in the cytoplasm, providing the force for cell motility. Seems to contact the pointed end of the daughter actin filament. In addition to its role in the cytoplasmic cytoskeleton, the Arp2/3 complex also promotes actin polymerization in the nucleus, thereby regulating gene transcription and repair of damaged DNA. The Arp2/3 complex promotes homologous recombination (HR) repair in response to DNA damage by promoting nuclear actin polymerization, leading to drive motility of double-strand breaks (DSBs). This chain is Actin-related protein 3-B (actr3-b), found in Xenopus laevis (African clawed frog).